A 169-amino-acid polypeptide reads, in one-letter code: Thiol peroxidase (169 aa).

The 149-residue stretch at 19–167 (LKVGDRAPEA…YDEVVNKVKE (149 aa)) folds into the Thioredoxin domain. Residue Cys-61 is the Cysteine sulfenic acid (-SOH) intermediate of the active site. Cys-61 and Cys-95 are oxidised to a cystine.

It belongs to the peroxiredoxin family. Tpx subfamily. As to quaternary structure, homodimer.

The enzyme catalyses a hydroperoxide + [thioredoxin]-dithiol = an alcohol + [thioredoxin]-disulfide + H2O. Its function is as follows. Thiol-specific peroxidase that catalyzes the reduction of hydrogen peroxide and organic hydroperoxides to water and alcohols, respectively. Plays a role in cell protection against oxidative stress by detoxifying peroxides. In Aquifex aeolicus (strain VF5), this protein is Thiol peroxidase.